We begin with the raw amino-acid sequence, 149 residues long: Nucleoside diphosphate kinase (149 aa).

Residues lysine 9, phenylalanine 57, arginine 85, threonine 91, arginine 102, and asparagine 112 each coordinate ATP. Histidine 115 functions as the Pros-phosphohistidine intermediate in the catalytic mechanism.

The protein belongs to the NDK family. Homotetramer. Requires Mg(2+) as cofactor.

The protein localises to the cytoplasm. It carries out the reaction a 2'-deoxyribonucleoside 5'-diphosphate + ATP = a 2'-deoxyribonucleoside 5'-triphosphate + ADP. It catalyses the reaction a ribonucleoside 5'-diphosphate + ATP = a ribonucleoside 5'-triphosphate + ADP. Major role in the synthesis of nucleoside triphosphates other than ATP. The ATP gamma phosphate is transferred to the NDP beta phosphate via a ping-pong mechanism, using a phosphorylated active-site intermediate. This is Nucleoside diphosphate kinase from Nostoc sp. (strain PCC 7120 / SAG 25.82 / UTEX 2576).